Here is an 811-residue protein sequence, read N- to C-terminus: Protein MEI2-like 5 (811 aa).

RRM domains follow at residues 193 to 266 (RTLF…YSIP) and 278 to 351 (GTLV…PSRP). The disordered stretch occupies residues 371–397 (TKHNSFQIGSPSANSPPSLWSQLGSPT). Residues 374 to 397 (NSFQIGSPSANSPPSLWSQLGSPT) show a composition bias toward polar residues.

In terms of biological role, probable RNA-binding protein that may play a role in growth regulation. The sequence is that of Protein MEI2-like 5 (ML5) from Oryza sativa subsp. japonica (Rice).